The following is a 592-amino-acid chain: Catabolite repression protein creC (592 aa).

The tract at residues 119-140 (NSALAAAPVKDPSKKRKPKNNI) is disordered. 4 WD repeats span residues 248 to 288 (INSS…ALFI), 327 to 368 (LANQ…DVFR), 369 to 408 (SYYG…IIAR), and 411 to 455 (GHDS…LHRP). 2 disordered regions span residues 459-513 (HQTS…HPVE) and 556-592 (WDRP…MGSL). Composition is skewed to polar residues over residues 484 to 499 (SSGN…TAAD) and 564 to 576 (SDNY…SETL). Residues 529-566 (VGEDPICWLGFQEDTIMTSSLEGHIRTWDRPRENISDN) form a WD 5 repeat.

The protein belongs to the WD repeat creC family. As to quaternary structure, interacts with creB.

In terms of biological role, component of the regulatory network controlling carbon source utilization through ubiquitination and deubiquitination involving creA, creB, creC, creD and acrB. Required to prevent the proteolysis of the CreB deubiquitinating enzyme in the absence of carbon catabolite repression. CreB deubiquitinating enzyme stabilized in a complex with the CreC leads to the expression of genes such as those in the proline and quinate pathways. The chain is Catabolite repression protein creC (creC) from Emericella nidulans (strain FGSC A4 / ATCC 38163 / CBS 112.46 / NRRL 194 / M139) (Aspergillus nidulans).